Here is a 228-residue protein sequence, read N- to C-terminus: Nuclear phosphoprotein UL3 homolog (228 aa).

It belongs to the alphaherpesvirinae HHV-1 UL3 family. Phosphorylated.

It is found in the host nucleus. The sequence is that of Nuclear phosphoprotein UL3 homolog (MDV015) from Gallus gallus (Chicken).